Consider the following 416-residue polypeptide: Serine hydroxymethyltransferase (416 aa).

Residues Leu-118 and 122–124 (GHL) each bind (6S)-5,6,7,8-tetrahydrofolate. At Lys-226 the chain carries N6-(pyridoxal phosphate)lysine. (6S)-5,6,7,8-tetrahydrofolate-binding positions include Glu-242 and 350–352 (SPF).

It belongs to the SHMT family. Homodimer. Requires pyridoxal 5'-phosphate as cofactor.

It is found in the cytoplasm. The enzyme catalyses (6R)-5,10-methylene-5,6,7,8-tetrahydrofolate + glycine + H2O = (6S)-5,6,7,8-tetrahydrofolate + L-serine. It functions in the pathway one-carbon metabolism; tetrahydrofolate interconversion. Its pathway is amino-acid biosynthesis; glycine biosynthesis; glycine from L-serine: step 1/1. In terms of biological role, catalyzes the reversible interconversion of serine and glycine with tetrahydrofolate (THF) serving as the one-carbon carrier. This reaction serves as the major source of one-carbon groups required for the biosynthesis of purines, thymidylate, methionine, and other important biomolecules. Also exhibits THF-independent aldolase activity toward beta-hydroxyamino acids, producing glycine and aldehydes, via a retro-aldol mechanism. The chain is Serine hydroxymethyltransferase from Helicobacter pylori (strain G27).